Reading from the N-terminus, the 180-residue chain is UPF0134 protein MPN_368 (180 aa).

The protein belongs to the UPF0134 family.

This chain is UPF0134 protein MPN_368, found in Mycoplasma pneumoniae (strain ATCC 29342 / M129 / Subtype 1) (Mycoplasmoides pneumoniae).